A 135-amino-acid polypeptide reads, in one-letter code: Salivary protein 15 Iper-1 (135 aa).

Residues 1 to 22 (MESFVAMKVVCILFLFVVAAEA) form the signal peptide. Asparagine 93 and asparagine 104 each carry an N-linked (GlcNAc...) asparagine glycan. A CD4-binding region spans residues 116–135 (GPNKQTCADKSKCVGHIPGC).

It belongs to the salp15 family. Interacts with host CD4. Interacts with host DC-SIGN (CD209). In terms of assembly, (Microbial infection) Interacts with Borrelia outer surface protein C (OspC). Expressed in salivary glands from feeding female ticks. Highly expressed 4 days after start of feeding.

It localises to the secreted. Functionally, salivary tick protein that downregulates host immune system by binding to both dendritic cells, and CD4(+) T cells. Specifically binds to the CD4 coreceptor on T cells. This interaction prevents the activation of the Src kinase, Lck, and its downstream substrate Zap-70, and results in deficient activation of PLCgamma1, the repression of calcium fluxes triggered by T-cell antigen receptor (TCR) ligation, and a subsequent reduction in interleukin-2 production. This salivary protein also binds to DC-SIGN (CD209) on dendritic cells (DC) and activates the Raf-1 kinase/MEK signaling pathway that results in down-regulating expression of pro-inflammatory cytokines. Furthermore, it inhibits T cell proliferation induced by DCs. It also inhibits in vitro keratinocyte inflammation induced by Borrelia burgdorferi or by the major outer surface protein (OspC) of Borrelia. In addition, it downregulates chemokines and monocyte chemoattractant protein 1, as well as several antimicrobial peptides such as defensins, cathelicidin, psoriasin, and RNase 7. Apart from its immunomodulatory activities, it is also associated with protection of Borrelia spirochetes from antibody-mediated killing through its binding to OspC. In vivo, tests on different immune disease animal models show promising therapeutic results, e.g., in inhibiting HIV infection, experimental autoimmune encephalomyelitis, transplantation rejection, and asthma. Its function is as follows. (Microbial infection) Protects Borrelia garinii from anti-Borrelia antibody-mediated cytotoxicity in vitro. May facilitate B.garinii transmission in mouse model. (Microbial infection) Protects Borrelia burgdorferi from anti-Borrelia antibody-mediated cytotoxicity in vitro. In terms of biological role, (Microbial infection) Protects Borrelia afzelii from anti-Borrelia antibody-mediated cytotoxicity in vitro. The polypeptide is Salivary protein 15 Iper-1 (Ixodes persulcatus (Taiga tick)).